A 594-amino-acid chain; its full sequence is Elongation factor 4 (594 aa).

One can recognise a tr-type G domain in the interval lysine 2–glutamate 184. GTP contacts are provided by residues aspartate 14 to threonine 19 and asparagine 131 to aspartate 134.

This sequence belongs to the TRAFAC class translation factor GTPase superfamily. Classic translation factor GTPase family. LepA subfamily.

It is found in the cell inner membrane. It catalyses the reaction GTP + H2O = GDP + phosphate + H(+). Required for accurate and efficient protein synthesis under certain stress conditions. May act as a fidelity factor of the translation reaction, by catalyzing a one-codon backward translocation of tRNAs on improperly translocated ribosomes. Back-translocation proceeds from a post-translocation (POST) complex to a pre-translocation (PRE) complex, thus giving elongation factor G a second chance to translocate the tRNAs correctly. Binds to ribosomes in a GTP-dependent manner. This Francisella tularensis subsp. holarctica (strain FTNF002-00 / FTA) protein is Elongation factor 4.